The chain runs to 260 residues: 3'-5' ssDNA/RNA exonuclease TatD (260 aa).

A divalent metal cation-binding residues include E92, H128, and H153.

It belongs to the metallo-dependent hydrolases superfamily. TatD-type hydrolase family. TatD subfamily. In terms of assembly, monomer. Mg(2+) serves as cofactor.

The protein localises to the cytoplasm. Its function is as follows. 3'-5' exonuclease that prefers single-stranded DNA and RNA. May play a role in the H(2)O(2)-induced DNA damage repair. The chain is 3'-5' ssDNA/RNA exonuclease TatD from Pectobacterium parmentieri (strain WPP163) (Pectobacterium wasabiae (strain WPP163)).